We begin with the raw amino-acid sequence, 305 residues long: tRNA dimethylallyltransferase (305 aa).

11 to 18 (GPTAVGKT) serves as a coordination point for ATP. Substrate is bound at residue 13–18 (TAVGKT). Positions 36–39 (DSMQ) are interaction with substrate tRNA.

The protein belongs to the IPP transferase family. In terms of assembly, monomer. Mg(2+) serves as cofactor.

It catalyses the reaction adenosine(37) in tRNA + dimethylallyl diphosphate = N(6)-dimethylallyladenosine(37) in tRNA + diphosphate. Catalyzes the transfer of a dimethylallyl group onto the adenine at position 37 in tRNAs that read codons beginning with uridine, leading to the formation of N6-(dimethylallyl)adenosine (i(6)A). The protein is tRNA dimethylallyltransferase of Listeria monocytogenes serovar 1/2a (strain ATCC BAA-679 / EGD-e).